The following is a 583-amino-acid chain: Aspartate--tRNA ligase (583 aa).

Glu173 provides a ligand contact to L-aspartate. The aspartate stretch occupies residues 197 to 200 (QLFK). An L-aspartate-binding site is contributed by Arg219. ATP-binding positions include 219 to 221 (RDE) and Gln228. His444 provides a ligand contact to L-aspartate. Residue Glu478 participates in ATP binding. Position 485 (Arg485) interacts with L-aspartate. 530–533 (GLDR) contributes to the ATP binding site.

Belongs to the class-II aminoacyl-tRNA synthetase family. Type 1 subfamily. In terms of assembly, homodimer.

The protein localises to the cytoplasm. It carries out the reaction tRNA(Asp) + L-aspartate + ATP = L-aspartyl-tRNA(Asp) + AMP + diphosphate. In terms of biological role, catalyzes the attachment of L-aspartate to tRNA(Asp) in a two-step reaction: L-aspartate is first activated by ATP to form Asp-AMP and then transferred to the acceptor end of tRNA(Asp). The sequence is that of Aspartate--tRNA ligase from Azobacteroides pseudotrichonymphae genomovar. CFP2.